Reading from the N-terminus, the 131-residue chain is Small ribosomal subunit protein bS6 (131 aa).

The tract at residues 100-131 (SPMVKAKDERRSRDYSLEDANMDAEEAGDSEE) is disordered. The span at 104-115 (KAKDERRSRDYS) shows a compositional bias: basic and acidic residues. The span at 119 to 131 (ANMDAEEAGDSEE) shows a compositional bias: acidic residues.

Belongs to the bacterial ribosomal protein bS6 family.

In terms of biological role, binds together with bS18 to 16S ribosomal RNA. This Photorhabdus laumondii subsp. laumondii (strain DSM 15139 / CIP 105565 / TT01) (Photorhabdus luminescens subsp. laumondii) protein is Small ribosomal subunit protein bS6.